The following is a 521-amino-acid chain: Protein TESPA1 (521 aa).

Ser-311 bears the Phosphoserine mark. The span at 331–341 shows a compositional bias: polar residues; sequence QQDSDLGQFSQ. Disordered regions lie at residues 331 to 351 and 461 to 521; these read QQDSDLGQFSQEDPVPPAEGK and QQKW…GKDS. Over residues 466–475 the composition is skewed to basic and acidic residues; that stretch reads QSVDRPELRR. The segment covering 485-498 has biased composition (acidic residues); that stretch reads FDLEEVQSNSEEEQ. Over residues 505 to 514 the composition is skewed to basic residues; the sequence is SRPRHPHHHQ.

Interacts with PLCG1 and GRB2; the association is increased with prolonged stimulation of the TCR and may facilitate the assembly of the LAT signalosome. Interacts with ITPR1. Also interacts with ITPR3. Interacts with HSPA9. May be phosphorylated in response to store-operated Ca(+2) entry.

It localises to the cytoplasm. The protein localises to the endoplasmic reticulum membrane. Required for the development and maturation of T-cells, its function being essential for the late stages of thymocyte development. Plays a role in T-cell antigen receptor (TCR)-mediated activation of the ERK and NFAT signaling pathways, possibly by serving as a scaffolding protein that promotes the assembly of the LAT signalosome in thymocytes. May play a role in the regulation of inositol 1,4,5-trisphosphate receptor-mediated Ca(2+) release and mitochondrial Ca(2+) uptake via the mitochondria-associated endoplasmic reticulum membrane (MAM) compartment. The polypeptide is Protein TESPA1 (TESPA1) (Homo sapiens (Human)).